We begin with the raw amino-acid sequence, 162 residues long: Peptide deformylase (162 aa).

Fe cation contacts are provided by C91 and H133. E134 is an active-site residue. Residue H137 participates in Fe cation binding.

The protein belongs to the polypeptide deformylase family. Fe(2+) serves as cofactor.

The catalysed reaction is N-terminal N-formyl-L-methionyl-[peptide] + H2O = N-terminal L-methionyl-[peptide] + formate. Its function is as follows. Removes the formyl group from the N-terminal Met of newly synthesized proteins. Requires at least a dipeptide for an efficient rate of reaction. N-terminal L-methionine is a prerequisite for activity but the enzyme has broad specificity at other positions. In Finegoldia magna (strain ATCC 29328 / DSM 20472 / WAL 2508) (Peptostreptococcus magnus), this protein is Peptide deformylase.